The primary structure comprises 70 residues: U2-agatoxin-Ao1b (70 aa).

Residues 1-20 (MRAIISLILISAMVFSMIAA) form the signal peptide. A propeptide spanning residues 21-34 (VPEEEGLQLSEDER) is cleaved from the precursor. 3 cysteine pairs are disulfide-bonded: cysteine 37/cysteine 53, cysteine 44/cysteine 58, and cysteine 52/cysteine 68. Leucine 69 carries the leucine amide modification.

The protein belongs to the neurotoxin 01 (U2-agtx) family. In terms of tissue distribution, expressed by the venom gland.

It localises to the secreted. Insect active toxin causing rapid but reversible paralysis in crickets. No activity shown in mammals. Does not show effect on mammalian voltage-gated calcium channels. This chain is U2-agatoxin-Ao1b, found in Agelena orientalis (Funnel-web spider).